A 345-amino-acid chain; its full sequence is 4-hydroxyproline 2-epimerase (345 aa).

Position 85 (glutamine 85) interacts with substrate. Residue serine 93 is the Proton acceptor of the active site. Residues 94–95 (GS) and aspartate 251 each bind substrate. Cysteine 255 serves as the catalytic Proton donor. A substrate-binding site is contributed by 256–257 (GT).

It belongs to the proline racemase family.

It catalyses the reaction trans-4-hydroxy-L-proline = cis-4-hydroxy-D-proline. In terms of biological role, catalyzes the epimerization of trans-4-hydroxy-L-proline (t4LHyp) to cis-4-hydroxy-D-proline (c4DHyp). May be involved in a degradation pathway of t4LHyp, which would allow A.tumefaciens to grow on t4LHyp as a sole carbon source. Can also catalyze the epimerization of trans-3-hydroxy-L-proline (t3LHyp) to cis-3-hydroxy-D-proline (c3DHyp) in vitro. Displays no proline racemase activity. This chain is 4-hydroxyproline 2-epimerase, found in Agrobacterium fabrum (strain C58 / ATCC 33970) (Agrobacterium tumefaciens (strain C58)).